Reading from the N-terminus, the 854-residue chain is pH-response regulator protein palA/prr-1 (854 aa).

The BRO1 domain maps to 5–402 (HVLSLPFRKS…SELESMTSQL (398 aa)). Residues 632-699 (RLDRLYESEL…DAAYYKYKEI (68 aa)) are a coiled coil. 2 disordered regions span residues 739-782 (EEEI…EPIQ) and 801-854 (PQQQ…IRFG). A compositionally biased stretch (polar residues) spans 746–759 (PLSSLNMHQSSFSY). The span at 767 to 782 (QPPPPPPQIPFPEPIQ) shows a compositional bias: pro residues. A compositionally biased stretch (low complexity) spans 827-839 (QGQQHQQEQGQPG).

Belongs to the palA/RIM20 family. As to quaternary structure, interacts with pacc-1 by binding to its two YPX[LI] motifs.

Its function is as follows. Required for the proteolytic cleavage of the transcription factor pacc-1 in response to alkaline ambient pH. May act as a scaffold protein that recruits the calpain-like protease palB/cpr-8 via snf7/vps-3 to its substrate pacc-1. The protein is pH-response regulator protein palA/prr-1 (prr-1) of Neurospora crassa (strain ATCC 24698 / 74-OR23-1A / CBS 708.71 / DSM 1257 / FGSC 987).